We begin with the raw amino-acid sequence, 72 residues long: Translation initiation factor IF-1 (72 aa).

Residues 1-72 (MSKQTAIEQD…TKGRISFRYK (72 aa)) enclose the S1-like domain.

The protein belongs to the IF-1 family. As to quaternary structure, component of the 30S ribosomal translation pre-initiation complex which assembles on the 30S ribosome in the order IF-2 and IF-3, IF-1 and N-formylmethionyl-tRNA(fMet); mRNA recruitment can occur at any time during PIC assembly.

The protein localises to the cytoplasm. In terms of biological role, one of the essential components for the initiation of protein synthesis. Stabilizes the binding of IF-2 and IF-3 on the 30S subunit to which N-formylmethionyl-tRNA(fMet) subsequently binds. Helps modulate mRNA selection, yielding the 30S pre-initiation complex (PIC). Upon addition of the 50S ribosomal subunit IF-1, IF-2 and IF-3 are released leaving the mature 70S translation initiation complex. This Porphyromonas gingivalis (strain ATCC BAA-308 / W83) protein is Translation initiation factor IF-1.